The chain runs to 132 residues: Agouti-signaling protein (132 aa).

An N-terminal signal peptide occupies residues 1–22 (MDVTRLLLATLLVFLCFFAAYS). N-linked (GlcNAc...) asparagine glycosylation is present at asparagine 39. Residues 61 to 93 (KISRKEAEKKRSSKKEASKQKVARPRTPLSVPC) form a disordered region. Positions 64–79 (RKEAEKKRSSKKEASK) are enriched in basic and acidic residues. 5 cysteine pairs are disulfide-bonded: cysteine 93/cysteine 108, cysteine 100/cysteine 114, cysteine 107/cysteine 125, cysteine 111/cysteine 132, and cysteine 116/cysteine 123. An Agouti domain is found at 93-132 (CVSTRGSCKPPAPACCHPCASCQCRFFRSACSCRVLNVNC).

The protein localises to the secreted. In terms of biological role, involved in the regulation of melanogenesis. The binding of ASP to MC1R precludes alpha-MSH initiated signaling and thus blocks production of cAMP, leading to a down-regulation of eumelanogenesis (brown/black pigment) and thus increasing synthesis of pheomelanin (yellow/red pigment). This is Agouti-signaling protein (ASIP) from Callithrix geoffroyi (Geoffroy's marmoset).